The following is a 266-amino-acid chain: Integral membrane protein 2B (266 aa).

The Cytoplasmic segment spans residues Met1–Cys54. A helical; Signal-anchor for type II membrane protein transmembrane segment spans residues Trp55 to Leu75. Topologically, residues Tyr76–Ser266 are lumenal. The interval Glu102 to Val134 is necessary for interaction with APP and inhibitor effects on APP processing. Residues Phe137–Leu231 form the BRICHOS domain. Disulfide bonds link Cys164–Cys223 and Cys248–Cys265. A glycan (N-linked (GlcNAc...) asparagine) is linked at Asn170.

This sequence belongs to the ITM2 family. Homodimer; disulfide-linked. Interacts with SPPL2A and SPPL2B. Interacts with APP. Mature BRI2 (mBRI2) interacts with the APP amyloid-beta A4 protein; the interaction occurs at the cell surface and in the endocytic compartments and enable alpha- and beta-secretase-induced APP cleavage inhibition. Mature BRI2 (mBRI2) interacts with the APP C99; the interaction occurs in the endocytic compartments and enable gamma-secretase-induced C99 cleavage inhibition. May form heterodimers with Bri23 peptide and APP amyloid-beta protein 40. Interacts with ADAM7 in sperm; the interaction increases following capacitation. In terms of processing, the ectodomain C-terminal part of the imBRI2 is processed by furin producing a secreted Bri23 peptide and a mature BRI2, membrane form (mBRI2). The remaining part of the ectodomain of mBRI2 containing the BRICHOS domain is cleaved by ADAM10 and is secreted (BRI2C, soluble form). The membrane-bound N-terminal fragment (BRI2C, membrane form) is further proteolytically processed by SPPL2A and SPPL2B through regulated intramembrane proteolysis producing a secreted C-peptide and a BRI2 intracellular domain (BRI2 ICD) released in the cytosol. Shedding by ADAM10 facilitates intramembrane cleavage but is not absolutely required for BRI2 ICD generation. Post-translationally, glycosylation at Asn-170 is important for cell surface localization, but doesn't affect furin- and ADAM10-induced proteolytic processing.

Its subcellular location is the golgi apparatus membrane. It is found in the cell membrane. It localises to the endosome membrane. The protein resides in the secreted. Plays a regulatory role in the processing of the amyloid-beta A4 precursor protein (APP) and acts as an inhibitor of the amyloid-beta peptide aggregation and fibrils deposition. Plays a role in the induction of neurite outgrowth. Functions as a protease inhibitor by blocking access of secretases to APP cleavage sites. Functionally, mature BRI2 (mBRI2) functions as a modulator of the amyloid-beta A4 precursor protein (APP) processing leading to a strong reduction in the secretion of secretase-processed amyloid-beta protein 40 and amyloid-beta protein 42. In terms of biological role, bri23 peptide prevents aggregation of APP amyloid-beta protein 42 into toxic oligomers. This Sus scrofa (Pig) protein is Integral membrane protein 2B (ITM2B).